The sequence spans 154 residues: Myoglobin (154 aa).

A Globin domain is found at 2 to 148 (GLSDGEWQIV…FRNDIAAKYK (147 aa)). Position 4 is a phosphoserine (serine 4). Histidine 65 is a binding site for nitrite. Histidine 65 serves as a coordination point for O2. Threonine 68 is subject to Phosphothreonine. Heme b is bound at residue histidine 94.

This sequence belongs to the globin family. As to quaternary structure, monomeric.

It is found in the cytoplasm. The protein resides in the sarcoplasm. It carries out the reaction Fe(III)-heme b-[protein] + nitric oxide + H2O = Fe(II)-heme b-[protein] + nitrite + 2 H(+). The enzyme catalyses H2O2 + AH2 = A + 2 H2O. Monomeric heme protein which primary function is to store oxygen and facilitate its diffusion within muscle tissues. Reversibly binds oxygen through a pentacoordinated heme iron and enables its timely and efficient release as needed during periods of heightened demand. Depending on the oxidative conditions of tissues and cells, and in addition to its ability to bind oxygen, it also has a nitrite reductase activity whereby it regulates the production of bioactive nitric oxide. Under stress conditions, like hypoxia and anoxia, it also protects cells against reactive oxygen species thanks to its pseudoperoxidase activity. In Lycaon pictus (African wild dog), this protein is Myoglobin (MB).